The following is a 365-amino-acid chain: MDDAAVLKRRGYIMGINLGEGSYAKVKSAYSERLKFNVAVKIIDRKKAPSDFLEKFLPREIEILAMLNHRSIVKTYEIFETSDGKVYIVMELGVQGDLLEFIKTRGALQEDDARKKFHQLSSAIKYCHDLDVVHRDLKCENLLLDKDFNIKLSDFGFSKRCLRDDSGRLILSKTFCGSAAYAAPEVLQGIPYQPKVYDIWSLGVILYIMVCGSMPYDDSNIKKMLRIQKEHRVNFPRSKHLTGECKDLIYRMLQPDVNRRLHIDEILNHCWVQPKARGLSSGAINKEGESSRATEPSWIPEPGADKKSATKLEPREEARSEARSESKPQEDTLQVVRQSENVGLSSELNRDTEEGHPQQPSETHT.

A Protein kinase domain is found at 12–272 (YIMGINLGEG…IDEILNHCWV (261 aa)). Residues 18–26 (LGEGSYAKV) and lysine 41 each bind ATP. Aspartate 136 acts as the Proton acceptor in catalysis. At threonine 174 the chain carries Phosphothreonine. The tract at residues 282 to 365 (GAINKEGESS…HPQQPSETHT (84 aa)) is disordered. Positions 303-330 (GADKKSATKLEPREEARSEARSESKPQE) are enriched in basic and acidic residues. The segment covering 331–347 (DTLQVVRQSENVGLSSE) has biased composition (polar residues).

The protein belongs to the protein kinase superfamily. CAMK Ser/Thr protein kinase family. Interacts with TSSK2. Interacts with HSP90; this interaction stabilizes TSSK1. It depends on Mg(2+) as a cofactor. Autophosphorylated. Post-translationally, ubiquitinated; HSP90 activity negatively regulates ubiquitination and degradation. Testis-specific. Expressed only in postmeiotic spermatids at the final stages of cytodifferentiation in the seminiferous tubules (at protein level). Not detected in released sperms in the lumen of the seminiferous tubules and the epididymis.

It is found in the cytoplasm. It localises to the cytoplasmic vesicle. The protein localises to the secretory vesicle. The protein resides in the acrosome. Its subcellular location is the cell projection. It is found in the cilium. It localises to the flagellum. It carries out the reaction L-seryl-[protein] + ATP = O-phospho-L-seryl-[protein] + ADP + H(+). The enzyme catalyses L-threonyl-[protein] + ATP = O-phospho-L-threonyl-[protein] + ADP + H(+). Its activity is regulated as follows. Activated by phosphorylation on Thr-174, potentially by autophosphorylation. Its function is as follows. Testis-specific serine/threonine-protein kinase required during spermatid development. Phosphorylates 'Ser-281' of TSKS. Involved in the late stages of spermatogenesis, during the reconstruction of the cytoplasm. During spermatogenesis, required for the transformation of a ring-shaped structure around the base of the flagellum originating from the chromatoid body. The polypeptide is Testis-specific serine/threonine-protein kinase 1 (Tssk1b) (Mus musculus (Mouse)).